We begin with the raw amino-acid sequence, 228 residues long: Non-fluorescent flavoprotein (228 aa).

It belongs to the bacterial luciferase oxidoreductase family. In terms of assembly, homodimer. FMN serves as cofactor.

The sequence is that of Non-fluorescent flavoprotein (luxF) from Photobacterium leiognathi.